A 281-amino-acid chain; its full sequence is Bis(5'-nucleosyl)-tetraphosphatase, symmetrical (281 aa).

This sequence belongs to the Ap4A hydrolase family.

It catalyses the reaction P(1),P(4)-bis(5'-adenosyl) tetraphosphate + H2O = 2 ADP + 2 H(+). Its function is as follows. Hydrolyzes diadenosine 5',5'''-P1,P4-tetraphosphate to yield ADP. In Acidovorax ebreus (strain TPSY) (Diaphorobacter sp. (strain TPSY)), this protein is Bis(5'-nucleosyl)-tetraphosphatase, symmetrical.